A 117-amino-acid chain; its full sequence is uncharacterized protein (117 aa).

The next 4 helical transmembrane spans lie at 3 to 23, 40 to 60, 66 to 86, and 94 to 114; these read AVPI…NILL, FLTP…LLFA, LEVS…LIIA, and PFHL…IFLA.

The protein to E.coli and S.aureus ethidium bromide resistance proteins (ebr/QacC/EmrE/MvrC).

The protein localises to the cell membrane. This is an uncharacterized protein from Sinorhizobium fredii (strain NBRC 101917 / NGR234).